A 406-amino-acid chain; its full sequence is Tryptophan 2,3-dioxygenase (406 aa).

Substrate contacts are provided by residues 72 to 76 and arginine 144; that span reads FIVTH. Histidine 328 lines the heme pocket. Threonine 342 serves as a coordination point for substrate.

Belongs to the tryptophan 2,3-dioxygenase family. In terms of assembly, homotetramer. Dimer of dimers. It depends on heme as a cofactor.

The catalysed reaction is L-tryptophan + O2 = N-formyl-L-kynurenine. It participates in amino-acid degradation; L-tryptophan degradation via kynurenine pathway; L-kynurenine from L-tryptophan: step 1/2. Functionally, heme-dependent dioxygenase that catalyzes the oxidative cleavage of the L-tryptophan (L-Trp) pyrrole ring and converts L-tryptophan to N-formyl-L-kynurenine. Catalyzes the oxidative cleavage of the indole moiety. This chain is Tryptophan 2,3-dioxygenase, found in Xenopus tropicalis (Western clawed frog).